A 297-amino-acid chain; its full sequence is Ribosomal protein L11 methyltransferase (297 aa).

S-adenosyl-L-methionine is bound by residues T139, G164, D186, and N233.

Belongs to the methyltransferase superfamily. PrmA family.

Its subcellular location is the cytoplasm. It catalyses the reaction L-lysyl-[protein] + 3 S-adenosyl-L-methionine = N(6),N(6),N(6)-trimethyl-L-lysyl-[protein] + 3 S-adenosyl-L-homocysteine + 3 H(+). Its function is as follows. Methylates ribosomal protein L11. This chain is Ribosomal protein L11 methyltransferase, found in Trichodesmium erythraeum (strain IMS101).